The following is a 1032-amino-acid chain: Probable LRR receptor-like serine/threonine-protein kinase At1g56130 (1032 aa).

Positions 1 to 29 (MTRIRRSPCLLLLIIWFMCIAGSVQVVQS) are cleaved as a signal peptide. Residues 30 to 636 (QNQTGATTHP…PPSKGKNRTG (607 aa)) are Extracellular-facing. Asparagine 31, asparagine 61, and asparagine 95 each carry an N-linked (GlcNAc...) asparagine glycan. 10 LRR repeats span residues 101 to 122 (ITNI…LWTL), 123 to 146 (TYLT…IGNL), 148 to 170 (RMQW…IGLL), 171 to 194 (TDLR…IGRC), 196 to 217 (KLQQ…SFAN), 242 to 265 (WTKL…SFSN), 290 to 314 (MKSL…IGEH), 315 to 338 (SSLR…LFNL), 340 to 360 (QLTH…TQKT), and 361 to 385 (QSLR…SLPS). Asparagine 145 is a glycosylation site (N-linked (GlcNAc...) asparagine). A glycan (N-linked (GlcNAc...) asparagine) is linked at asparagine 182. N-linked (GlcNAc...) asparagine glycosylation is found at asparagine 265, asparagine 302, asparagine 337, asparagine 348, and asparagine 352. N-linked (GlcNAc...) asparagine glycosylation is found at asparagine 394, asparagine 580, and asparagine 633. The chain crosses the membrane as a helical span at residues 637–657 (TIVGVIVGVGLLSILAGVVMF). Residues 658–1032 (TIRKRRKRYT…MLGSKINEGR (375 aa)) lie on the Cytoplasmic side of the membrane. Position 683 is a phosphothreonine (threonine 683). Residues 694 to 968 (FDPSNKLGEG…VAMLSGDVEI (275 aa)) form the Protein kinase domain. ATP contacts are provided by residues 700-708 (LGEGGFGPV) and lysine 722. Tyrosine 767 carries the post-translational modification Phosphotyrosine. The active-site Proton acceptor is aspartate 818. Residues serine 822 and serine 851 each carry the phosphoserine modification. A phosphothreonine mark is found at threonine 852 and threonine 857. Residue tyrosine 865 is modified to Phosphotyrosine. Residues 1008–1032 (APGSEISPRDSDFKPMLGSKINEGR) are disordered.

It belongs to the protein kinase superfamily. Ser/Thr protein kinase family.

It localises to the cell membrane. It catalyses the reaction L-seryl-[protein] + ATP = O-phospho-L-seryl-[protein] + ADP + H(+). The enzyme catalyses L-threonyl-[protein] + ATP = O-phospho-L-threonyl-[protein] + ADP + H(+). The sequence is that of Probable LRR receptor-like serine/threonine-protein kinase At1g56130 from Arabidopsis thaliana (Mouse-ear cress).